Reading from the N-terminus, the 275-residue chain is Large ribosomal subunit protein uL2c (275 aa).

The disordered stretch occupies residues Thr219–Leu255.

This sequence belongs to the universal ribosomal protein uL2 family. As to quaternary structure, part of the 50S ribosomal subunit.

It is found in the plastid. It localises to the chloroplast. This is Large ribosomal subunit protein uL2c (rpl2) from Trieres chinensis (Marine centric diatom).